The following is a 284-amino-acid chain: ATP phosphoribosyltransferase (284 aa).

Belongs to the ATP phosphoribosyltransferase family. Long subfamily. Equilibrium between an active dimeric form, an inactive hexameric form and higher aggregates. Interconversion between the various forms is largely reversible and is influenced by the natural substrates and inhibitors of the enzyme. It depends on Mg(2+) as a cofactor.

Its subcellular location is the cytoplasm. The enzyme catalyses 1-(5-phospho-beta-D-ribosyl)-ATP + diphosphate = 5-phospho-alpha-D-ribose 1-diphosphate + ATP. It participates in amino-acid biosynthesis; L-histidine biosynthesis; L-histidine from 5-phospho-alpha-D-ribose 1-diphosphate: step 1/9. Its activity is regulated as follows. Feedback inhibited by histidine. In terms of biological role, catalyzes the condensation of ATP and 5-phosphoribose 1-diphosphate to form N'-(5'-phosphoribosyl)-ATP (PR-ATP). Has a crucial role in the pathway because the rate of histidine biosynthesis seems to be controlled primarily by regulation of HisG enzymatic activity. This is ATP phosphoribosyltransferase (hisG) from Mycobacterium bovis (strain ATCC BAA-935 / AF2122/97).